The primary structure comprises 575 residues: Epsin-1 (575 aa).

5 residues coordinate a 1,2-diacyl-sn-glycero-3-phospho-(1D-myo-inositol-4,5-bisphosphate): lysine 11, arginine 25, asparagine 30, arginine 63, and histidine 73. In terms of domain architecture, ENTH spans 12-144 (NIVHNYSEAE…RDEDRLREER (133 aa)). The disordered stretch occupies residues 150–186 (TKEKLAQTATASSAAVGSGPPPEAEQAWPQSSGEEEL). The span at 157 to 167 (TATASSAAVGS) shows a compositional bias: low complexity. UIM domains are found at residues 183 to 202 (EEEL…ADQP), 208 to 227 (EDDV…HDKE), and 233 to 252 (GDDL…TGGK). Positions 264 to 575 (FTTPAPPQAS…PAPNTNPFLL (312 aa)) are disordered. Tandem repeats lie at residues 274–276 (DPW), 294–296 (DPW), 306–308 (DPW), 319–321 (DPW), 332–334 (DPW), 349–351 (DPW), 367–369 (DPW), and 377–379 (DPW). Positions 274–379 (DPWGGPASVP…APAPAFSDPW (106 aa)) are 8 X 3 AA repeats of D-P-W. 2 stretches are compositionally biased toward low complexity: residues 279–299 (PASV…WGGP) and 306–316 (DPWGGAAPTPA). Residues 332 to 346 (DPWGGTPAPAAGEGP) show a composition bias toward low complexity. A compositionally biased stretch (low complexity) spans 367–379 (DPWAPAPAFSDPW). Serine 382 carries the phosphoserine modification. The short motif at 401–410 (DEFSDFDRLR) is the [DE]-X(1,2)-F-X-X-[FL]-X-X-X-R motif element. Phosphoserine occurs at positions 418 and 419. At threonine 420 the chain carries Phosphothreonine. 3 positions are modified to phosphoserine: serine 434, serine 446, and serine 453. Residues 453-467 (SPPPAATPTPTPPTR) are compositionally biased toward pro residues. Residues threonine 459, threonine 463, and threonine 469 each carry the phosphothreonine modification. Serine 472 bears the Phosphoserine mark. Position 493 is a phosphothreonine (threonine 493). Tandem repeats lie at residues 501-503 (NPF) and 517-519 (NPF). Positions 501-573 (NPFLPSGAPP…GPPAPNTNPF (73 aa)) are 3 X 3 AA repeats of N-P-F. Residue arginine 533 is modified to Omega-N-methylarginine. Pro residues predominate over residues 556–569 (GLPPMMPPGPPAPN). Repeat unit 3 spans residues 571-573 (NPF).

It belongs to the epsin family. In terms of assembly, monomer. Binds clathrin and ZBTB16/ZNF145. Binds ubiquitinated proteins. Interacts with RALBP1 in a complex also containing NUMB and TFAP2A during interphase and mitosis. Interacts with AP2B1. Interacts with UBQLN2. Interacts with ITSN1. Interacts with AP2A1 and AP2A2. Interacts with REPS2; the interaction is direct. Interacts with EPS15; the interaction is direct. Interacts with ENTREP1. Post-translationally, phosphorylated on serine and/or threonine residues in mitotic cells. Phosphorylation reduces interaction with REPS2, AP-2 and the membrane fraction. Depolarization of synaptosomes results in dephosphorylation. Ubiquitinated.

It is found in the cytoplasm. The protein resides in the cell membrane. It localises to the nucleus. Its subcellular location is the membrane. The protein localises to the clathrin-coated pit. Binds to membranes enriched in phosphatidylinositol 4,5-bisphosphate (PtdIns(4,5)P2). Modifies membrane curvature and facilitates the formation of clathrin-coated invaginations. Regulates receptor-mediated endocytosis. The protein is Epsin-1 (Epn1) of Mus musculus (Mouse).